A 503-amino-acid chain; its full sequence is Lithocholate 6-beta-hydroxylase (503 aa).

Heme is bound at residue cysteine 442.

The protein belongs to the cytochrome P450 family. Requires heme as cofactor.

It localises to the endoplasmic reticulum membrane. The protein localises to the microsome membrane. The enzyme catalyses lithocholate + reduced [NADPH--hemoprotein reductase] + O2 = 6beta-hydroxylithocholate + oxidized [NADPH--hemoprotein reductase] + H2O + H(+). Catalyzes the 6 beta-hydroxylation of lithocholic acid and steroid hormones. This Mesocricetus auratus (Golden hamster) protein is Lithocholate 6-beta-hydroxylase (CYP3A10).